A 407-amino-acid chain; its full sequence is Protein ZNF365 (407 aa).

S16 is modified (phosphoserine). A C2H2-type; degenerate zinc finger spans residues 26 to 51; it reads FRCPRCGDHTRFRSLSSLRAHLEFSH. The residue at position 138 (S138) is a Phosphoserine. Residues 169-296 adopt a coiled-coil conformation; that stretch reads VEAVDRTIEK…KQLEYYQSQQ (128 aa). At T175 the chain carries Phosphothreonine. The segment at 347-392 is disordered; the sequence is LKKAKDDRASMQPAKAIHEQAESSRDLCRPPKKGELLGFGRKGNIR. Residues 362-381 show a composition bias toward basic and acidic residues; that stretch reads AIHEQAESSRDLCRPPKKGE. S369 carries the phosphoserine modification.

As to quaternary structure, homodimers. Interacts with NDE1 and NDEL1. Interacts with DISC1. Interacts with PARP1. Interacts with MCRS1.

It localises to the cytoplasm. The protein resides in the cytoskeleton. Its subcellular location is the microtubule organizing center. The protein localises to the centrosome. In terms of biological role, involved in the regulation of neurogenesis. Negatively regulates neurite outgrowth. Involved in the morphogenesis of basket cells in the somatosensory cortex during embryogenesis. Involved in the positive regulation of oligodendrocyte differentiation during postnatal growth. Involved in dendritic arborization, morphogenesis of spine density dendrite, and establishment of postsynaptic dendrite density in cortical pyramidal neurons. Involved in homologous recombination (HR) repair pathway. Required for proper resolution of DNA double-strand breaks (DSBs) by HR. Is required for recovery of stalled replication forks, and directly contributes to genomic stability. Interacts with PARP1 and mediates MRE11-dependent DNA end resection during replication fork recovery. Contributes to genomic stability by preventing telomere dysfunction. The chain is Protein ZNF365 (ZNF365) from Pongo abelii (Sumatran orangutan).